The primary structure comprises 311 residues: tRNA-cytidine(32) 2-sulfurtransferase (311 aa).

The PP-loop motif motif lies at 47–52; that stretch reads SGGKDS. [4Fe-4S] cluster is bound by residues C122, C125, and C213.

It belongs to the TtcA family. In terms of assembly, homodimer. Mg(2+) is required as a cofactor. The cofactor is [4Fe-4S] cluster.

The protein resides in the cytoplasm. The enzyme catalyses cytidine(32) in tRNA + S-sulfanyl-L-cysteinyl-[cysteine desulfurase] + AH2 + ATP = 2-thiocytidine(32) in tRNA + L-cysteinyl-[cysteine desulfurase] + A + AMP + diphosphate + H(+). Its pathway is tRNA modification. In terms of biological role, catalyzes the ATP-dependent 2-thiolation of cytidine in position 32 of tRNA, to form 2-thiocytidine (s(2)C32). The sulfur atoms are provided by the cysteine/cysteine desulfurase (IscS) system. The chain is tRNA-cytidine(32) 2-sulfurtransferase from Pectobacterium atrosepticum (strain SCRI 1043 / ATCC BAA-672) (Erwinia carotovora subsp. atroseptica).